The chain runs to 479 residues: Aspartyl/glutamyl-tRNA(Asn/Gln) amidotransferase subunit B (479 aa).

This sequence belongs to the GatB/GatE family. GatB subfamily. As to quaternary structure, heterotrimer of A, B and C subunits.

The enzyme catalyses L-glutamyl-tRNA(Gln) + L-glutamine + ATP + H2O = L-glutaminyl-tRNA(Gln) + L-glutamate + ADP + phosphate + H(+). It catalyses the reaction L-aspartyl-tRNA(Asn) + L-glutamine + ATP + H2O = L-asparaginyl-tRNA(Asn) + L-glutamate + ADP + phosphate + 2 H(+). Its function is as follows. Allows the formation of correctly charged Asn-tRNA(Asn) or Gln-tRNA(Gln) through the transamidation of misacylated Asp-tRNA(Asn) or Glu-tRNA(Gln) in organisms which lack either or both of asparaginyl-tRNA or glutaminyl-tRNA synthetases. The reaction takes place in the presence of glutamine and ATP through an activated phospho-Asp-tRNA(Asn) or phospho-Glu-tRNA(Gln). In Halorhodospira halophila (strain DSM 244 / SL1) (Ectothiorhodospira halophila (strain DSM 244 / SL1)), this protein is Aspartyl/glutamyl-tRNA(Asn/Gln) amidotransferase subunit B.